The chain runs to 313 residues: tRNA dimethylallyltransferase (313 aa).

11–18 (GPTAGGKT) contributes to the ATP binding site. 13 to 18 (TAGGKT) serves as a coordination point for substrate. 3 interaction with substrate tRNA regions span residues 36–39 (DSAL), 160–164 (QRIGR), and 243–248 (RCVGYR).

This sequence belongs to the IPP transferase family. As to quaternary structure, monomer. Mg(2+) serves as cofactor.

The catalysed reaction is adenosine(37) in tRNA + dimethylallyl diphosphate = N(6)-dimethylallyladenosine(37) in tRNA + diphosphate. Catalyzes the transfer of a dimethylallyl group onto the adenine at position 37 in tRNAs that read codons beginning with uridine, leading to the formation of N6-(dimethylallyl)adenosine (i(6)A). This chain is tRNA dimethylallyltransferase, found in Neisseria meningitidis serogroup B (strain ATCC BAA-335 / MC58).